The primary structure comprises 460 residues: Cysteine--tRNA ligase (460 aa).

Residue Cys29 participates in Zn(2+) binding. A 'HIGH' region motif is present at residues 31–41 (MTVYDYMHIGH). 3 residues coordinate Zn(2+): Cys210, His235, and Glu239. The short motif at 267–271 (KMSKS) is the 'KMSKS' region element. Position 270 (Lys270) interacts with ATP.

This sequence belongs to the class-I aminoacyl-tRNA synthetase family. As to quaternary structure, monomer. Zn(2+) is required as a cofactor.

It is found in the cytoplasm. It catalyses the reaction tRNA(Cys) + L-cysteine + ATP = L-cysteinyl-tRNA(Cys) + AMP + diphosphate. This is Cysteine--tRNA ligase from Coxiella burnetii (strain RSA 493 / Nine Mile phase I).